A 449-amino-acid chain; its full sequence is Probable glycine dehydrogenase (decarboxylating) subunit 1 (449 aa).

The protein belongs to the GcvP family. N-terminal subunit subfamily. As to quaternary structure, the glycine cleavage system is composed of four proteins: P, T, L and H. In this organism, the P 'protein' is a heterodimer of two subunits.

The enzyme catalyses N(6)-[(R)-lipoyl]-L-lysyl-[glycine-cleavage complex H protein] + glycine + H(+) = N(6)-[(R)-S(8)-aminomethyldihydrolipoyl]-L-lysyl-[glycine-cleavage complex H protein] + CO2. Its function is as follows. The glycine cleavage system catalyzes the degradation of glycine. The P protein binds the alpha-amino group of glycine through its pyridoxal phosphate cofactor; CO(2) is released and the remaining methylamine moiety is then transferred to the lipoamide cofactor of the H protein. The protein is Probable glycine dehydrogenase (decarboxylating) subunit 1 of Sulfurisphaera tokodaii (strain DSM 16993 / JCM 10545 / NBRC 100140 / 7) (Sulfolobus tokodaii).